Reading from the N-terminus, the 266-residue chain is MGSRPRSPSAFPAPWWGQQPGGPGPAKRLRLEEPAGPEPRVAPSLEDPAGTPAVGALTSIVVLAAGCALRVPLDDVDLVLELPPTSILRVSLDGHTLILIPEVLLSSVDERSGAQDDSSAGLEVDVFLGALREDVVVEQEVFCASVPEIAAQEEAYEEDADPEFPELQMDSAAGSAAGLYSSARSMFSPYREGPIPEPCALAPNPSSEGHSPGPFFDPEFRLLEPVPSSPLQPLPPSPRVGSPGPHAHPPLPKRPPCKARRRLFQE.

Low complexity predominate over residues 1-18; that stretch reads MGSRPRSPSAFPAPWWGQ. Disordered stretches follow at residues 1–47 and 197–266; these read MGSR…SLED and EPCA…LFQE. Residues 227 to 238 show a composition bias toward pro residues; that stretch reads PSSPLQPLPPSP. Over residues 255-266 the composition is skewed to basic residues; that stretch reads PPCKARRRLFQE.

Belongs to the PRR23 family.

This Homo sapiens (Human) protein is Proline-rich protein 23A (PRR23A).